Reading from the N-terminus, the 230-residue chain is Orotidine 5'-phosphate decarboxylase (230 aa).

Substrate is bound by residues Asp-9, Lys-31, 58-67, Thr-120, Arg-180, Gln-188, Gly-208, and Arg-209; that span reads DLKFFDIPNT. Residue Lys-60 is the Proton donor of the active site.

It belongs to the OMP decarboxylase family. Type 1 subfamily. Homodimer.

The catalysed reaction is orotidine 5'-phosphate + H(+) = UMP + CO2. The protein operates within pyrimidine metabolism; UMP biosynthesis via de novo pathway; UMP from orotate: step 2/2. Catalyzes the decarboxylation of orotidine 5'-monophosphate (OMP) to uridine 5'-monophosphate (UMP). This is Orotidine 5'-phosphate decarboxylase from Maridesulfovibrio salexigens (strain ATCC 14822 / DSM 2638 / NCIMB 8403 / VKM B-1763) (Desulfovibrio salexigens).